The sequence spans 77 residues: Large ribosomal subunit protein eL20 (77 aa).

The protein belongs to the eukaryotic ribosomal protein eL20 family. As to quaternary structure, part of the 50S ribosomal subunit. Binds 23S rRNA.

This Thermococcus gammatolerans (strain DSM 15229 / JCM 11827 / EJ3) protein is Large ribosomal subunit protein eL20.